The following is a 30-amino-acid chain: Circulin A (30 aa).

Positions 1–30 form a cross-link, cyclopeptide (Gly-Asn); the sequence is GIPCGESCVWIPCISAALGCSCKNKVCYRN. 3 cysteine pairs are disulfide-bonded: C4-C20, C8-C22, and C13-C27.

This is a cyclic peptide. Expressed in fruit, pedicel, root and stem but not in leaf (at protein level).

Probably participates in a plant defense mechanism. This Chassalia chartacea (Chassalia curviflora) protein is Circulin A.